Consider the following 238-residue polypeptide: Large ribosomal subunit protein uL2 (238 aa).

A disordered region spans residues 201–238; the sequence is FGGGGHQHPGRPKTIARGTSPGRTVGHVAARQTGRSRK.

The protein belongs to the universal ribosomal protein uL2 family. In terms of assembly, part of the 50S ribosomal subunit. Forms a bridge to the 30S subunit in the 70S ribosome.

Its function is as follows. One of the primary rRNA binding proteins. Required for association of the 30S and 50S subunits to form the 70S ribosome, for tRNA binding and peptide bond formation. It has been suggested to have peptidyltransferase activity; this is somewhat controversial. Makes several contacts with the 16S rRNA in the 70S ribosome. This is Large ribosomal subunit protein uL2 from Methanoregula boonei (strain DSM 21154 / JCM 14090 / 6A8).